The primary structure comprises 209 residues: Redox-sensing transcriptional repressor Rex (209 aa).

Residues 16–55 (LYYRFIQNLSLSGKQRVSSAELSEAVKVDSATIRRDFSYF) constitute a DNA-binding region (H-T-H motif). NAD(+) is bound at residue 90–95 (GVGNLG).

This sequence belongs to the transcriptional regulatory Rex family. As to quaternary structure, homodimer.

Its subcellular location is the cytoplasm. Its function is as follows. Modulates transcription in response to changes in cellular NADH/NAD(+) redox state. This is Redox-sensing transcriptional repressor Rex from Bacillus thuringiensis (strain Al Hakam).